The chain runs to 138 residues: MLAPKRVKFRKQQKGRMRGTAFRGSTLSFGDFGLKALECGYITSRQIEAARIAITRHVKRGGKVWIRFFPDKPFTKKPAETRMGKGKGSPEGWHAVIKPGRVLYEIKGVPETIAREALNLAAHKLPIPTRFVSRQDVL.

Belongs to the universal ribosomal protein uL16 family. Part of the 50S ribosomal subunit.

Functionally, binds 23S rRNA and is also seen to make contacts with the A and possibly P site tRNAs. The chain is Large ribosomal subunit protein uL16 from Syntrophobacter fumaroxidans (strain DSM 10017 / MPOB).